A 567-amino-acid polypeptide reads, in one-letter code: UPF0313 protein TM_0337 (567 aa).

The Radical SAM core domain maps to Lys-288–Lys-560. [4Fe-4S] cluster contacts are provided by Cys-303, Cys-307, and Cys-310.

The protein belongs to the UPF0313 family. The cofactor is [4Fe-4S] cluster.

The protein is UPF0313 protein TM_0337 of Thermotoga maritima (strain ATCC 43589 / DSM 3109 / JCM 10099 / NBRC 100826 / MSB8).